Consider the following 102-residue polypeptide: Class II hydrophobin 3 (102 aa).

Residues 1–16 (MQFLAVAALLFTTALA) form the signal peptide. 4 disulfide bridges follow: Cys-33-Cys-83, Cys-44-Cys-74, Cys-45-Cys-57, and Cys-84-Cys-95.

Belongs to the cerato-ulmin hydrophobin family. In terms of assembly, homotetramer. Further self-assembles to form highly ordered films at water-air interfaces through intermolecular interactions. In terms of tissue distribution, expressed in the conidia, vegetative growth and induction growth stages.

It localises to the secreted. It is found in the cell wall. The protein localises to the cytoplasm. Its function is as follows. Aerial growth, conidiation, and dispersal of filamentous fungi in the environment rely upon a capability of their secreting small amphipathic proteins called hydrophobins (HPBs) with low sequence identity. Class I can self-assemble into an outermost layer of rodlet bundles on aerial cell surfaces, conferring cellular hydrophobicity that supports fungal growth, development and dispersal; whereas Class II form highly ordered films at water-air interfaces through intermolecular interactions but contribute nothing to the rodlet structure. Hbf3 is a class II hydrophobin that has a role in vegetative growth and asexual development. This chain is Class II hydrophobin 3, found in Hypocrea jecorina (strain QM6a) (Trichoderma reesei).